A 186-amino-acid polypeptide reads, in one-letter code: Ribosome-recycling factor (186 aa).

It belongs to the RRF family.

It is found in the cytoplasm. Functionally, responsible for the release of ribosomes from messenger RNA at the termination of protein biosynthesis. May increase the efficiency of translation by recycling ribosomes from one round of translation to another. This is Ribosome-recycling factor from Acidovorax ebreus (strain TPSY) (Diaphorobacter sp. (strain TPSY)).